A 126-amino-acid polypeptide reads, in one-letter code: NADPH-dependent 7-cyano-7-deazaguanine reductase (126 aa).

The active-site Thioimide intermediate is Cys40. The active-site Proton donor is Asp47. Substrate-binding positions include 62–64 and 81–82; these read IEL and HE.

It belongs to the GTP cyclohydrolase I family. QueF type 1 subfamily.

The protein localises to the cytoplasm. The catalysed reaction is 7-aminomethyl-7-carbaguanine + 2 NADP(+) = 7-cyano-7-deazaguanine + 2 NADPH + 3 H(+). Its pathway is tRNA modification; tRNA-queuosine biosynthesis. Functionally, catalyzes the NADPH-dependent reduction of 7-cyano-7-deazaguanine (preQ0) to 7-aminomethyl-7-deazaguanine (preQ1). The sequence is that of NADPH-dependent 7-cyano-7-deazaguanine reductase from Campylobacter jejuni subsp. doylei (strain ATCC BAA-1458 / RM4099 / 269.97).